Consider the following 166-residue polypeptide: Interferon gamma (166 aa).

Positions 1–23 (MKYTSSFLALLLSVLLGFSGSYG) are cleaved as a signal peptide. Q24 carries the post-translational modification Pyrrolidone carboxylic acid. N-linked (GlcNAc...) asparagine glycosylation is found at N39 and N106.

This sequence belongs to the type II (or gamma) interferon family. In terms of assembly, homodimer. Interacts with IFNGR1 (via extracellular domain); this interaction promotes IFNGR1 dimerization. Released primarily from activated T lymphocytes.

Its subcellular location is the secreted. In terms of biological role, type II interferon produced by immune cells such as T-cells and NK cells that plays crucial roles in antimicrobial, antiviral, and antitumor responses by activating effector immune cells and enhancing antigen presentation. Primarily signals through the JAK-STAT pathway after interaction with its receptor IFNGR1 to affect gene regulation. Upon IFNG binding, IFNGR1 intracellular domain opens out to allow association of downstream signaling components JAK2, JAK1 and STAT1, leading to STAT1 activation, nuclear translocation and transcription of IFNG-regulated genes. Many of the induced genes are transcription factors such as IRF1 that are able to further drive regulation of a next wave of transcription. Plays a role in class I antigen presentation pathway by inducing a replacement of catalytic proteasome subunits with immunoproteasome subunits. In turn, increases the quantity, quality, and repertoire of peptides for class I MHC loading. Increases the efficiency of peptide generation also by inducing the expression of activator PA28 that associates with the proteasome and alters its proteolytic cleavage preference. Up-regulates as well MHC II complexes on the cell surface by promoting expression of several key molecules such as cathepsins B/CTSB, H/CTSH, and L/CTSL. Participates in the regulation of hematopoietic stem cells during development and under homeostatic conditions by affecting their development, quiescence, and differentiation. The polypeptide is Interferon gamma (IFNG) (Capra hircus (Goat)).